Reading from the N-terminus, the 1500-residue chain is Copper-transporting ATPase 1 (1500 aa).

The Cytoplasmic segment spans residues 1-653; that stretch reads MDPSMGVNSV…KREIRQWRRS (653 aa). HMA domains are found at residues 8–74 and 85–151; these read NSVT…FDAV and TDTL…LDTG. The Cu(+) site is built by Thr-18, Cys-19, and Cys-22. Thr-152 carries the post-translational modification Phosphothreonine. Residues 171–237 enclose the HMA 3 domain; sequence VVLKMKVEGM…QIEAMGFPAF (67 aa). Residues Cys-182 and Cys-185 each contribute to the Cu(+) site. Ser-270 is modified (phosphoserine). The HMA 4 domain maps to 277–343; sequence STATFIIDGM…AIEAVSPGLY (67 aa). Residues Cys-288 and Cys-291 each contribute to the Cu(+) site. Residue Thr-327 is modified to Phosphothreonine. Residues Ser-339, Ser-353, Ser-357, and Ser-362 each carry the phosphoserine modification. HMA domains lie at 377 to 443, 488 to 554, and 564 to 630; these read QETV…FDAT, SKCY…FGAT, and GVLE…FEAS. 6 residues coordinate Cu(+): Cys-388, Cys-391, Cys-499, Cys-502, Cys-575, and Cys-578. Residues 654–675 traverse the membrane as a helical segment; the sequence is FLVSLFFCIPVMGLMIYMMVMD. Topologically, residues 676 to 714 are extracellular; that stretch reads HHFATLHHNQNMSKEEMINLHSSMFLERQILPGLSVMNL. A glycan (N-linked (GlcNAc...) asparagine) is linked at Asn-686. Residues 715-734 traverse the membrane as a helical segment; that stretch reads LSFLLCVPVQFFGGWYFYIQ. Residues 735–741 are Cytoplasmic-facing; sequence AYKALKH. Residues 742 to 762 traverse the membrane as a helical segment; that stretch reads KTANMDVLIVLATTIAFAYSL. Over 763 to 781 the chain is Extracellular; it reads IILLVAMYERAKVNPITFF. The chain crosses the membrane as a helical span at residues 782-802; sequence DTPPMLFVFIALGRWLEHIAK. Residues 803 to 936 lie on the Cytoplasmic side of the membrane; the sequence is GKTSEALAKL…KAPIQQFADK (134 aa). The helical transmembrane segment at 937 to 959 threads the bilayer; that stretch reads LSGYFVPFIVFVSIATLLVWIVI. Residues 960–989 are Extracellular-facing; it reads GFLNFEIVETYFPGYNRSISRTETIIRFAF. The N-linked (GlcNAc...) asparagine glycan is linked to Asn-975. The helical transmembrane segment at 990 to 1011 threads the bilayer; that stretch reads QASITVLCIACPCSLGLATPTA. Over 1012 to 1356 the chain is Cytoplasmic; it reads VMVGTGVGAQ…LSRKTVKRIR (345 aa). Asp-1044 acts as the 4-aspartylphosphate intermediate in catalysis. ATP is bound at residue Glu-1081. Thr-1212 carries the phosphothreonine modification. 2 residues coordinate Mg(2+): Asp-1301 and Asp-1305. A helical transmembrane segment spans residues 1357–1374; sequence INFVFALIYNLVGIPIAA. Over 1375 to 1385 the chain is Extracellular; that stretch reads GVFMPIGLVLQ. The chain crosses the membrane as a helical span at residues 1386–1405; it reads PWMGSAAMAASSVSVVLSSL. Residues 1406 to 1500 lie on the Cytoplasmic side of the membrane; the sequence is FLKLYRKPTY…DFREDDDTAL (95 aa). Phosphoserine occurs at positions 1430, 1432, 1460, 1463, and 1466. Positions 1467–1468 match the Endocytosis signal motif; that stretch reads LL. A phosphoserine mark is found at Ser-1469, Ser-1473, Ser-1476, and Ser-1486. The interval 1486–1500 is PDZD11-binding; it reads SLLVGDFREDDDTAL. The Endocytosis signal motif lies at 1487–1488; the sequence is LL.

It belongs to the cation transport ATPase (P-type) (TC 3.A.3) family. Type IB subfamily. Monomer. Interacts with PDZD11. Interacts with ATOX1 and COMMD1. Interacts with TYRP1. Directly interacts with SOD3; this interaction is copper-dependent and is required for SOD3 activity. As to expression, widely expressed including in heart, brain, lung, muscle, kidney, pancreas, and to a lesser extent placenta. Expressed in fibroblasts, aortic smooth muscle cells, aortic endothelial cells and umbilical vein endothelial cells (at protein level). Expressed in cerebellum and brain cortex.

It localises to the golgi apparatus. Its subcellular location is the trans-Golgi network membrane. The protein localises to the cell membrane. It is found in the melanosome membrane. The protein resides in the early endosome membrane. It localises to the cell projection. Its subcellular location is the axon. The protein localises to the dendrite. It is found in the postsynaptic density. The protein resides in the cytoplasm. It localises to the cytosol. Its subcellular location is the endoplasmic reticulum. The catalysed reaction is Cu(+)(in) + ATP + H2O = Cu(+)(out) + ADP + phosphate + H(+). Functionally, ATP-driven copper (Cu(+)) ion pump that plays an important role in intracellular copper ion homeostasis. Within a catalytic cycle, acquires Cu(+) ion from donor protein on the cytoplasmic side of the membrane and delivers it to acceptor protein on the lumenal side. The transfer of Cu(+) ion across the membrane is coupled to ATP hydrolysis and is associated with a transient phosphorylation that shifts the pump conformation from inward-facing to outward-facing state. Under physiological conditions, at low cytosolic copper concentration, it is localized at the trans-Golgi network (TGN) where it transfers Cu(+) ions to cuproenzymes of the secretory pathway. Upon elevated cytosolic copper concentrations, it relocalizes to the plasma membrane where it is responsible for the export of excess Cu(+) ions. May play a dual role in neuron function and survival by regulating cooper efflux and neuronal transmission at the synapse as well as by supplying Cu(+) ions to enzymes such as PAM, TYR and SOD3. In the melanosomes of pigmented cells, provides copper cofactor to TYR to form an active TYR holoenzyme for melanin biosynthesis. This chain is Copper-transporting ATPase 1, found in Homo sapiens (Human).